Here is a 279-residue protein sequence, read N- to C-terminus: MRVNGRNLTNLRFADDIVLIANHPNTASKMLQELVQKCSEVGLEINTGKTKVLRNRLADPSKVYFGSPSSTTQLDDVDEYIYLGRQINAHNNLMPEIHRRRRAAWAAFNGSKNTTDSITDKKIRVNLFDSIVLPALTYGSEAWTFNKALSERVRITHASLERRLVGITLTQQRERDLHREDIRVMSQVRDPLNFVKKRKLGWAGHVARRKDGRWTTLMTEWRPWNWKRYVGRTPMRWTDSLRKEITTRDADGEVITPWSTIAKDRKEWLAVIRRNTTNS.

The Reverse transcriptase domain occupies 1 to 87; the sequence is MRVNGRNLTN…DEYIYLGRQI (87 aa).

This is an uncharacterized protein from Caenorhabditis elegans.